Reading from the N-terminus, the 60-residue chain is Translational regulator CsrA (60 aa).

It belongs to the CsrA/RsmA family. In terms of assembly, homodimer; the beta-strands of each monomer intercalate to form a hydrophobic core, while the alpha-helices form wings that extend away from the core.

Its subcellular location is the cytoplasm. In terms of biological role, a key translational regulator that binds mRNA to regulate translation initiation and/or mRNA stability. Mediates global changes in gene expression, shifting from rapid growth to stress survival by linking envelope stress, the stringent response and the catabolite repression systems. Usually binds in the 5'-UTR; binding at or near the Shine-Dalgarno sequence prevents ribosome-binding, repressing translation, binding elsewhere in the 5'-UTR can activate translation and/or stabilize the mRNA. Its function is antagonized by small RNA(s). The protein is Translational regulator CsrA of Histophilus somni (strain 2336) (Haemophilus somnus).